A 278-amino-acid polypeptide reads, in one-letter code: MALKTFKPTSPGRRALVLVDRSALHKGRPEKTLVEGLTKKGGRNNMGRITARRRGGGAKRLYRLVDFKRRKWDMPATVERLEYDPNRTAFIALIKYEDGEKAYILAPQRLSEGDTVIASAKCDVKPGNAMPLKAVPVGTILHNVEMKPEKGGQIARSAGAYVQLVGRDAGYAQIRLASGELRMVSDKCMATVGAVSNPDHLNINLGKAGRNRHLGKRPSVRGVVMNPVDHPHGGGEGRTSGGRHPVTPWGKPTKGAKTRKNKSTDKFIIRSRHERKKR.

Positions 222-278 are disordered; sequence GVVMNPVDHPHGGGEGRTSGGRHPVTPWGKPTKGAKTRKNKSTDKFIIRSRHERKKR. Positions 269 to 278 are enriched in basic residues; the sequence is IRSRHERKKR.

Belongs to the universal ribosomal protein uL2 family. In terms of assembly, part of the 50S ribosomal subunit. Forms a bridge to the 30S subunit in the 70S ribosome.

Its function is as follows. One of the primary rRNA binding proteins. Required for association of the 30S and 50S subunits to form the 70S ribosome, for tRNA binding and peptide bond formation. It has been suggested to have peptidyltransferase activity; this is somewhat controversial. Makes several contacts with the 16S rRNA in the 70S ribosome. This is Large ribosomal subunit protein uL2 from Maricaulis maris (strain MCS10) (Caulobacter maris).